The following is a 162-amino-acid chain: Nitrogen regulatory protein (162 aa).

A PTS EIIA type-2 domain is found at N12 to A156. The active-site Tele-phosphohistidine intermediate is H73.

The protein localises to the cytoplasm. In terms of biological role, seems to have a role in regulating nitrogen assimilation. This chain is Nitrogen regulatory protein (ptsN), found in Klebsiella oxytoca.